The following is a 177-amino-acid chain: ATP synthase subunit b, chloroplastic (177 aa).

Residues 26 to 44 (IINLSIVLFVVIRFLGEAL) form a helical membrane-spanning segment.

This sequence belongs to the ATPase B chain family. In terms of assembly, F-type ATPases have 2 components, F(1) - the catalytic core - and F(0) - the membrane proton channel. F(1) has five subunits: alpha(3), beta(3), gamma(1), delta(1), epsilon(1). F(0) has four main subunits: a(1), b(1), b'(1) and c(10-14). The alpha and beta chains form an alternating ring which encloses part of the gamma chain. F(1) is attached to F(0) by a central stalk formed by the gamma and epsilon chains, while a peripheral stalk is formed by the delta, b and b' chains.

The protein localises to the plastid. It is found in the chloroplast thylakoid membrane. Its function is as follows. F(1)F(0) ATP synthase produces ATP from ADP in the presence of a proton or sodium gradient. F-type ATPases consist of two structural domains, F(1) containing the extramembraneous catalytic core and F(0) containing the membrane proton channel, linked together by a central stalk and a peripheral stalk. During catalysis, ATP synthesis in the catalytic domain of F(1) is coupled via a rotary mechanism of the central stalk subunits to proton translocation. Component of the F(0) channel, it forms part of the peripheral stalk, linking F(1) to F(0). The sequence is that of ATP synthase subunit b, chloroplastic from Bigelowiella natans (Pedinomonas minutissima).